Consider the following 429-residue polypeptide: 3-phosphoshikimate 1-carboxyvinyltransferase (429 aa).

3 residues coordinate 3-phosphoshikimate: Lys-11, Ser-12, and Arg-16. Lys-11 is a binding site for phosphoenolpyruvate. The phosphoenolpyruvate site is built by Gly-82 and Arg-110. Ser-155, Gln-157, Asp-302, and Lys-329 together coordinate 3-phosphoshikimate. Gln-157 contacts phosphoenolpyruvate. Asp-302 serves as the catalytic Proton acceptor. Residues Arg-333 and Arg-385 each coordinate phosphoenolpyruvate.

It belongs to the EPSP synthase family. In terms of assembly, monomer.

Its subcellular location is the cytoplasm. The enzyme catalyses 3-phosphoshikimate + phosphoenolpyruvate = 5-O-(1-carboxyvinyl)-3-phosphoshikimate + phosphate. It functions in the pathway metabolic intermediate biosynthesis; chorismate biosynthesis; chorismate from D-erythrose 4-phosphate and phosphoenolpyruvate: step 6/7. Functionally, catalyzes the transfer of the enolpyruvyl moiety of phosphoenolpyruvate (PEP) to the 5-hydroxyl of shikimate-3-phosphate (S3P) to produce enolpyruvyl shikimate-3-phosphate and inorganic phosphate. This Helicobacter pylori (strain G27) protein is 3-phosphoshikimate 1-carboxyvinyltransferase.